The following is a 523-amino-acid chain: Sucrose 6(F)-phosphate phosphorylase (523 aa).

Sucrose 6(F)-phosphate contacts are provided by residues aspartate 58, histidine 96, 221 to 223 (RLD), glutamate 264, 326 to 327 (HD), and lysine 434. Aspartate 223 serves as the catalytic Nucleophile. Glutamate 264 functions as the Proton donor/acceptor in the catalytic mechanism.

It belongs to the glycosyl hydrolase 13 family. Sucrose phosphorylase subfamily. As to quaternary structure, monomer.

The catalysed reaction is sucrose 6(F)-phosphate + phosphate = beta-D-fructose 6-phosphate + alpha-D-glucose 1-phosphate. In terms of biological role, catalyzes the reversible phosphorolysis of sucrose 6(F)-phosphate into alpha-D-glucose 1-phosphate (Glc1P) and D-fructose 6-phosphate. May be involved in a new pathway for the degradation of sucrose, which could become phosphorylated on its fructose moiety during uptake via a PTS system. Shows strict specificity since it does not catalyze reactions with alternative substrates. This is Sucrose 6(F)-phosphate phosphorylase from Ilumatobacter coccineus (strain NBRC 103263 / KCTC 29153 / YM16-304).